Consider the following 144-residue polypeptide: Cell division protein SepF (144 aa).

It belongs to the SepF family. As to quaternary structure, homodimer. Interacts with FtsZ.

It localises to the cytoplasm. Its function is as follows. Cell division protein that is part of the divisome complex and is recruited early to the Z-ring. Probably stimulates Z-ring formation, perhaps through the cross-linking of FtsZ protofilaments. Its function overlaps with FtsA. The sequence is that of Cell division protein SepF from Oceanobacillus iheyensis (strain DSM 14371 / CIP 107618 / JCM 11309 / KCTC 3954 / HTE831).